Reading from the N-terminus, the 162-residue chain is Lipid droplet assembly factor 1-A (162 aa).

At 1 to 42 the chain is on the cytoplasmic side; sequence MASAENLYQEKMQELQKQMNKVMQTINNHSKVEAFLNSPFGQ. The helical transmembrane segment at 43–63 threads the bilayer; that stretch reads YLDQHPFVTLSLLVFISLSAV. At 64 to 65 the chain is on the lumenal side; the sequence is PV. A helical transmembrane segment spans residues 66-86; that stretch reads GIFLTLIAGTAIAVCLAVLII. Position 87 (glutamate 87) is a topological domain, cytoplasmic. Residues 88–108 traverse the membrane as a helical segment; the sequence is GIVISVGGIALLCILCGLAVM. Serine 109 is a topological domain (lumenal). Residues 110–130 traverse the membrane as a helical segment; it reads LGVAAVLCVSYVAGSSVLNYI. At 131-162 the chain is on the cytoplasmic side; sequence HAYRVTVGTRGRSGPISLNHETTTAEKSYRSS.

Belongs to the LDAF1 family.

It localises to the endoplasmic reticulum membrane. The protein localises to the lipid droplet. Functionally, plays an important role in the formation of lipid droplets (LD) which are storage organelles at the center of lipid and energy homeostasis. The polypeptide is Lipid droplet assembly factor 1-A (Xenopus laevis (African clawed frog)).